Consider the following 214-residue polypeptide: 3,4-dihydroxy-2-butanone 4-phosphate synthase (214 aa).

D-ribulose 5-phosphate is bound by residues 37-38 (RE), Asp-42, 150-154 (RRGHT), and Glu-174. Mg(2+) is bound at residue Glu-38. His-153 provides a ligand contact to Mg(2+).

Belongs to the DHBP synthase family. In terms of assembly, homodimer. The cofactor is Mg(2+). Requires Mn(2+) as cofactor.

The enzyme catalyses D-ribulose 5-phosphate = (2S)-2-hydroxy-3-oxobutyl phosphate + formate + H(+). The protein operates within cofactor biosynthesis; riboflavin biosynthesis; 2-hydroxy-3-oxobutyl phosphate from D-ribulose 5-phosphate: step 1/1. Its function is as follows. Catalyzes the conversion of D-ribulose 5-phosphate to formate and 3,4-dihydroxy-2-butanone 4-phosphate. The chain is 3,4-dihydroxy-2-butanone 4-phosphate synthase from Desulfotalea psychrophila (strain LSv54 / DSM 12343).